Reading from the N-terminus, the 556-residue chain is Urocanate hydratase (556 aa).

Residues 52 to 53 (GG), Gln130, 176 to 178 (GMG), Glu196, Arg201, 242 to 243 (NA), 263 to 267 (QTSAH), 273 to 274 (YL), and Tyr322 contribute to the NAD(+) site. Residue Cys410 is part of the active site. NAD(+) is bound at residue Gly492.

Belongs to the urocanase family. The cofactor is NAD(+).

Its subcellular location is the cytoplasm. It catalyses the reaction 4-imidazolone-5-propanoate = trans-urocanate + H2O. The protein operates within amino-acid degradation; L-histidine degradation into L-glutamate; N-formimidoyl-L-glutamate from L-histidine: step 2/3. Functionally, catalyzes the conversion of urocanate to 4-imidazolone-5-propionate. This Shewanella sp. (strain MR-7) protein is Urocanate hydratase.